Consider the following 272-residue polypeptide: Cell shape-determining protein MreC (272 aa).

The Cytoplasmic segment spans residues 1-8 (MNRFKKSK). A helical membrane pass occupies residues 9 to 29 (YVIIVFVTVLLVSALLATTYS). Residues 30 to 272 (STIVTKLGDG…VDVIELVGNS (243 aa)) lie on the Extracellular side of the membrane. The stretch at 64–112 (LTRTYNENESLKKQLYQLEVKSNEVESLKTENEQLRQLLDMKSKLQATK) forms a coiled coil.

The protein belongs to the MreC family. In terms of assembly, homodimer. Interacts with a number of proteins in the elongasome, including PBP1a (pbpA), PBP1b, PBP2a, PBP2b (penA), StkP, MltG, MreD and RodZ.

The protein resides in the cell membrane. Functionally, involved in formation and maintenance of cell shape, probably part of the elongasome which synthesizes peripheral peptidoglycan (PG). The sequence is that of Cell shape-determining protein MreC from Streptococcus pneumoniae (strain ATCC BAA-255 / R6).